The chain runs to 146 residues: Peptide methionine sulfoxide reductase MsrB (146 aa).

The region spanning 6–129 is the MsrB domain; it reads SAEAIAKLSA…NSASLRFVPK (124 aa). The Nucleophile role is filled by Cys-118.

This sequence belongs to the MsrB Met sulfoxide reductase family.

It catalyses the reaction L-methionyl-[protein] + [thioredoxin]-disulfide + H2O = L-methionyl-(R)-S-oxide-[protein] + [thioredoxin]-dithiol. The polypeptide is Peptide methionine sulfoxide reductase MsrB (Brucella melitensis biotype 1 (strain ATCC 23456 / CCUG 17765 / NCTC 10094 / 16M)).